The chain runs to 199 residues: Oligoribonuclease (199 aa).

The Exonuclease domain occupies Leu5–Leu170. Tyr127 is an active-site residue.

It belongs to the oligoribonuclease family.

It localises to the cytoplasm. Its function is as follows. 3'-to-5' exoribonuclease specific for small oligoribonucleotides. In Rhodococcus jostii (strain RHA1), this protein is Oligoribonuclease.